We begin with the raw amino-acid sequence, 283 residues long: Small ribosomal subunit protein uS2 (283 aa).

The disordered stretch occupies residues R229–N283. Over residues D246–N283 the composition is skewed to basic and acidic residues.

It belongs to the universal ribosomal protein uS2 family.

This is Small ribosomal subunit protein uS2 from Cutibacterium acnes (strain DSM 16379 / KPA171202) (Propionibacterium acnes).